A 119-amino-acid polypeptide reads, in one-letter code: Ribonuclease P protein component (119 aa).

It belongs to the RnpA family. In terms of assembly, consists of a catalytic RNA component (M1 or rnpB) and a protein subunit.

The enzyme catalyses Endonucleolytic cleavage of RNA, removing 5'-extranucleotides from tRNA precursor.. In terms of biological role, RNaseP catalyzes the removal of the 5'-leader sequence from pre-tRNA to produce the mature 5'-terminus. It can also cleave other RNA substrates such as 4.5S RNA. The protein component plays an auxiliary but essential role in vivo by binding to the 5'-leader sequence and broadening the substrate specificity of the ribozyme. The protein is Ribonuclease P protein component of Streptococcus equi subsp. zooepidemicus (strain MGCS10565).